Consider the following 569-residue polypeptide: Peroxynitrite isomerase THAP4 (569 aa).

The THAP-type zinc-finger motif lies at 1–85; it reads MVICCAAVNC…LKPTAVPSIF (85 aa). Positions 83 to 219 are disordered; it reads SIFHLSEKKR…GISMDDFTPP (137 aa). Positions 121–130 are enriched in polar residues; the sequence is IGSSLSSSDN. Position 159 is a phosphoserine (S159). The span at 196 to 210 shows a compositional bias: low complexity; sequence ASSSAADAGGADKSG. An HCFC1-binding motif (HBM) motif is present at residues 230 to 233; the sequence is LHSY. S234 carries the phosphoserine modification. The tract at residues 235 to 312 is disordered; sequence FSSKHTRERP…EAVQSEHSDA (78 aa). A compositionally biased stretch (basic and acidic residues) spans 242–262; sequence ERPSVPREPMDRKRLKRDIEP. A compositionally biased stretch (polar residues) spans 265 to 279; that stretch reads SGNSVAQSPPSSSLT. Residues 280–289 show a composition bias toward low complexity; that stretch reads ATPQKASQSP. The interval 407–569 is nitrobindin; that stretch reads PPKLNPVVEP…LHITYKKVTP (163 aa). Heme b is bound by residues T436 and H559.

This sequence in the C-terminal section; belongs to the nitrobindin family. As to quaternary structure, homodimer. The cofactor is heme b.

The protein resides in the cytoplasm. Its subcellular location is the nucleus. The enzyme catalyses peroxynitrite = nitrate. Its pathway is nitrogen metabolism. Functionally, heme-binding protein able to scavenge peroxynitrite and to protect free L-tyrosine against peroxynitrite-mediated nitration, by acting as a peroxynitrite isomerase that converts peroxynitrite to nitrate. Therefore, this protein likely plays a role in peroxynitrite sensing and in the detoxification of reactive nitrogen and oxygen species (RNS and ROS, respectively). Is able to bind nitric oxide (NO) in vitro, but may act as a sensor of peroxynitrite levels in vivo, possibly modulating the transcriptional activity residing in the N-terminal region. The protein is Peroxynitrite isomerase THAP4 of Rattus norvegicus (Rat).